Consider the following 311-residue polypeptide: MALPIIIDCDPGHDDAIALVLALASPELEVKAITSSAGNQTPEKTLRNVLRMLTLLKRPDIPVAGGAVKPLMRELIIADNVHGESGLNGPALPEPSFAPQSGTAVELMAKTLRESAQPVTIVSTGPQTNVALLLNSHPELHTKIARIVIMGGAMALGNWTPAAEFNIYVDPEAAEIVFQSGIPVVMAGLDVTHKAQIHAADIERFRAIGNPISTIVAELLDFFMEYHKDEKWGFVGAPLHDPCTIAWLLKPEIFTTVERWVGVETKGKYTQGMTVVDYYFLTGNKPNATVMVDVDSQGFVDLLAERLQYYA.

The active site involves His-240.

This sequence belongs to the IUNH family. RihA subfamily.

In terms of biological role, hydrolyzes cytidine or uridine to ribose and cytosine or uracil, respectively. This Salmonella gallinarum (strain 287/91 / NCTC 13346) protein is Pyrimidine-specific ribonucleoside hydrolase RihA.